Here is a 253-residue protein sequence, read N- to C-terminus: Ubiquinone/menaquinone biosynthesis C-methyltransferase UbiE (253 aa).

S-adenosyl-L-methionine-binding positions include Thr-76, Asp-97, and 125–126 (NA).

The protein belongs to the class I-like SAM-binding methyltransferase superfamily. MenG/UbiE family.

The catalysed reaction is a 2-demethylmenaquinol + S-adenosyl-L-methionine = a menaquinol + S-adenosyl-L-homocysteine + H(+). It carries out the reaction a 2-methoxy-6-(all-trans-polyprenyl)benzene-1,4-diol + S-adenosyl-L-methionine = a 5-methoxy-2-methyl-3-(all-trans-polyprenyl)benzene-1,4-diol + S-adenosyl-L-homocysteine + H(+). The protein operates within quinol/quinone metabolism; menaquinone biosynthesis; menaquinol from 1,4-dihydroxy-2-naphthoate: step 2/2. Its pathway is cofactor biosynthesis; ubiquinone biosynthesis. Its function is as follows. Methyltransferase required for the conversion of demethylmenaquinol (DMKH2) to menaquinol (MKH2) and the conversion of 2-polyprenyl-6-methoxy-1,4-benzoquinol (DDMQH2) to 2-polyprenyl-3-methyl-6-methoxy-1,4-benzoquinol (DMQH2). The chain is Ubiquinone/menaquinone biosynthesis C-methyltransferase UbiE from Rhodopseudomonas palustris (strain ATCC BAA-98 / CGA009).